The sequence spans 142 residues: Large ribosomal subunit protein uL13 (142 aa).

It belongs to the universal ribosomal protein uL13 family. As to quaternary structure, part of the 50S ribosomal subunit.

Functionally, this protein is one of the early assembly proteins of the 50S ribosomal subunit, although it is not seen to bind rRNA by itself. It is important during the early stages of 50S assembly. This Glaesserella parasuis serovar 5 (strain SH0165) (Haemophilus parasuis) protein is Large ribosomal subunit protein uL13.